Consider the following 74-residue polypeptide: Defensin-like protein 39 (74 aa).

The N-terminal stretch at 1–28 (MEKKSLAALSFLLLLVLFVAQEIVVTEA) is a signal peptide. Cystine bridges form between C31/C74, C42/C63, C48/C68, and C52/C70.

It belongs to the DEFL family. In terms of tissue distribution, pods.

Its subcellular location is the secreted. In terms of biological role, possesses antifungal activity. The protein is Defensin-like protein 39 (PI39) of Pisum sativum (Garden pea).